Here is a 271-residue protein sequence, read N- to C-terminus: Elongation factor Ts (271 aa).

The tract at residues 76–79 (TDFV) is involved in Mg(2+) ion dislocation from EF-Tu.

It belongs to the EF-Ts family.

The protein localises to the cytoplasm. Associates with the EF-Tu.GDP complex and induces the exchange of GDP to GTP. It remains bound to the aminoacyl-tRNA.EF-Tu.GTP complex up to the GTP hydrolysis stage on the ribosome. In Mycobacterium ulcerans (strain Agy99), this protein is Elongation factor Ts.